A 193-amino-acid polypeptide reads, in one-letter code: Xanthine phosphoribosyltransferase (193 aa).

The xanthine site is built by Leu20 and Asn27. 127-131 (AYGNA) is a 5-phospho-alpha-D-ribose 1-diphosphate binding site. Lys155 provides a ligand contact to xanthine.

The protein belongs to the purine/pyrimidine phosphoribosyltransferase family. Xpt subfamily. In terms of assembly, homodimer.

Its subcellular location is the cytoplasm. It carries out the reaction XMP + diphosphate = xanthine + 5-phospho-alpha-D-ribose 1-diphosphate. The protein operates within purine metabolism; XMP biosynthesis via salvage pathway; XMP from xanthine: step 1/1. Its function is as follows. Converts the preformed base xanthine, a product of nucleic acid breakdown, to xanthosine 5'-monophosphate (XMP), so it can be reused for RNA or DNA synthesis. This is Xanthine phosphoribosyltransferase from Porphyromonas gingivalis (strain ATCC BAA-308 / W83).